The sequence spans 823 residues: Putative ankyrin repeat domain-containing protein 20A3 (823 aa).

ANK repeat units lie at residues 66–95, 99–128, 132–161, 165–194, and 198–227; these read QHRTALHLACASGHVQVVTLLVNRKCQIDV, ENRTPLIQAVHCQEEACAVILLEHGANPNL, YGNTALHYAVYSESTSLAEKLLSHGAHIEA, DNNTPLLFAIICKKEKMVEFLLKRKASSHA, and LRRSALMLAVYYDSPGIVNILLKQNIDVFA. Disordered stretches follow at residues 301–343 and 355–402; these read VPEK…EVED and VQTL…LSEN. Positions 372–384 are enriched in basic and acidic residues; the sequence is QERHERSEKKQPQ. 3 coiled-coil regions span residues 431-480, 571-724, and 776-805; these read KKLK…KQLE, AFRY…NNST, and LVLEEKSKKLMNECDHLKESLFQYEREKTE.

The chain is Putative ankyrin repeat domain-containing protein 20A3 from Homo sapiens (Human).